The chain runs to 313 residues: Probable alpha-L-glutamate ligase (313 aa).

Residues 112–294 (LQMLMAQGIA…IALQMIVHLE (183 aa)) form the ATP-grasp domain. ATP-binding positions include Lys148, 185–186 (EF), Asp194, and 218–220 (RAN). The Mg(2+) site is built by Asp255, Glu267, and Asn269. Positions 255, 267, and 269 each coordinate Mn(2+).

It belongs to the RimK family. The cofactor is Mg(2+). Mn(2+) is required as a cofactor.

The protein is Probable alpha-L-glutamate ligase of Pasteurella multocida (strain Pm70).